The primary structure comprises 54 residues: Putative neurotoxin-I (54 aa).

Disulfide bonds link C20/C42, C28/C51, and C32/C53.

In terms of tissue distribution, expressed by the venom gland.

Its subcellular location is the secreted. In Lychas mucronatus (Chinese swimming scorpion), this protein is Putative neurotoxin-I.